Reading from the N-terminus, the 305-residue chain is Glycine--tRNA ligase alpha subunit (305 aa).

Belongs to the class-II aminoacyl-tRNA synthetase family. In terms of assembly, tetramer of two alpha and two beta subunits.

The protein localises to the cytoplasm. It carries out the reaction tRNA(Gly) + glycine + ATP = glycyl-tRNA(Gly) + AMP + diphosphate. The sequence is that of Glycine--tRNA ligase alpha subunit from Vibrio campbellii (strain ATCC BAA-1116).